We begin with the raw amino-acid sequence, 47 residues long: uncharacterized protein (47 aa).

Residues phenylalanine 24–isoleucine 47 form a disordered region.

This is an uncharacterized protein from Mycobacterium tuberculosis (strain ATCC 25618 / H37Rv).